A 457-amino-acid chain; its full sequence is Streptogrisin-C (457 aa).

The tat-type signal signal peptide spans 1 to 34 (MERTTLRRRALVAGTATVAVGALALAGLTGVASA). Residues 35-202 (DPAATAAPPV…ARSAEQPRAL (168 aa)) constitute a propeptide that is removed on maturation. The catalytic stretch occupies residues 203–393 (ADIRGGDAYY…QAYGLTLVTS (191 aa)). A disulfide bond links C219 and C239. Catalysis depends on charge relay system residues H238 and D266. Disulfide bonds link C305–C315 and C341–C368. S347 functions as the Charge relay system in the catalytic mechanism. Positions 393–412 (SGGGTPTDPPTTPPTDSPGG) are disordered. The linker stretch occupies residues 394 to 413 (GGGTPTDPPTTPPTDSPGGT). The span at 399 to 408 (TDPPTTPPTD) shows a compositional bias: pro residues. Residues 415-457 (AVGTAYAAGATVTYGGATYRCLQAHTAQPGWTPADVPALWQRV) form the Chitin-binding type-3 domain.

The protein belongs to the peptidase S1 family. In terms of assembly, monomer. Post-translationally, predicted to be exported by the Tat system. The position of the signal peptide cleavage has not been experimentally proven.

Its function is as follows. Hydrolysis of proteins with specificity similar to chymotrypsin. May be specialized for the degradation of chitin-linked proteins. Has a primary specificity for large aliphatic or aromatic amino acids. The chain is Streptogrisin-C (sprC) from Streptomyces griseus.